The chain runs to 493 residues: Glutamyl-tRNA(Gln) amidotransferase subunit A (493 aa).

Active-site charge relay system residues include lysine 79 and serine 159. Serine 183 serves as the catalytic Acyl-ester intermediate.

Belongs to the amidase family. GatA subfamily. Heterotrimer of A, B and C subunits.

The enzyme catalyses L-glutamyl-tRNA(Gln) + L-glutamine + ATP + H2O = L-glutaminyl-tRNA(Gln) + L-glutamate + ADP + phosphate + H(+). Its function is as follows. Allows the formation of correctly charged Gln-tRNA(Gln) through the transamidation of misacylated Glu-tRNA(Gln) in organisms which lack glutaminyl-tRNA synthetase. The reaction takes place in the presence of glutamine and ATP through an activated gamma-phospho-Glu-tRNA(Gln). The polypeptide is Glutamyl-tRNA(Gln) amidotransferase subunit A (Brucella canis (strain ATCC 23365 / NCTC 10854 / RM-666)).